The sequence spans 557 residues: MFKSDIEIAQESKMKNIKDIAENIGLTEEDIDLYGKYKCKISLDVLKNNKDKKDGKLILVTAINPTPAGEGKSTVTVGLGQALWKKNKKAVIALREPSLGPVFGIKGGAAGGGYSQVVPMEDINLHFTGDMHAITSANNLLAAAIDNHIHQGNILKIDQRRILFKRVMDMNDRALRNVIVALGGKVNGFPREDGFMITVASEIMAILCLAENLMDLKNKMGEILVAYSTEGNPIYCKDLEVQGAMALLMKDAIKPNLVQTLENTPAIIHGGPFANIAHGCNSILGTKMALKLGDYVITEAGFGADLGAEKFFDIKCRKANLKPNCVVIVATVRALKYNSGIPKENLKEQNMEALSKGIKNLGKHIENVNKFGVPAVVAINKFISDTEEEIEFIKKYCKELGAEVSIAEVWEKGGNGGLELADKVLDTIENKESKFNPIYEETLNIKQKIETIAQEIYGAEGVDYSKEAEKQISEIEKLDLDKKPVCMAKTQYSLSDDAKLLGRPCGFRINVKEVRISNGAGFIVVLTGNVMTMPGLPKKPAANNMNVLSDGNIVGLF.

66-73 (TPAGEGKS) is a binding site for ATP.

It belongs to the formate--tetrahydrofolate ligase family.

It carries out the reaction (6S)-5,6,7,8-tetrahydrofolate + formate + ATP = (6R)-10-formyltetrahydrofolate + ADP + phosphate. It participates in one-carbon metabolism; tetrahydrofolate interconversion. The protein is Formate--tetrahydrofolate ligase of Clostridium botulinum (strain Loch Maree / Type A3).